Here is a 91-residue protein sequence, read N- to C-terminus: Small ribosomal subunit protein bS18 (91 aa).

The protein belongs to the bacterial ribosomal protein bS18 family. Part of the 30S ribosomal subunit. Forms a tight heterodimer with protein bS6.

In terms of biological role, binds as a heterodimer with protein bS6 to the central domain of the 16S rRNA, where it helps stabilize the platform of the 30S subunit. In Burkholderia ambifaria (strain MC40-6), this protein is Small ribosomal subunit protein bS18.